A 332-amino-acid polypeptide reads, in one-letter code: tRNA-dihydrouridine(20/20a) synthase (332 aa).

FMN contacts are provided by residues P20–M22 and Q73. The active-site Proton donor is C103. Residues K142, H174, N214 to G216, and G236 to R237 each bind FMN.

This sequence belongs to the Dus family. DusA subfamily. Requires FMN as cofactor.

The enzyme catalyses 5,6-dihydrouridine(20) in tRNA + NADP(+) = uridine(20) in tRNA + NADPH + H(+). It carries out the reaction 5,6-dihydrouridine(20) in tRNA + NAD(+) = uridine(20) in tRNA + NADH + H(+). It catalyses the reaction 5,6-dihydrouridine(20a) in tRNA + NADP(+) = uridine(20a) in tRNA + NADPH + H(+). The catalysed reaction is 5,6-dihydrouridine(20a) in tRNA + NAD(+) = uridine(20a) in tRNA + NADH + H(+). Functionally, catalyzes the synthesis of 5,6-dihydrouridine (D), a modified base found in the D-loop of most tRNAs, via the reduction of the C5-C6 double bond in target uridines. Specifically modifies U20 and U20a in tRNAs. This chain is tRNA-dihydrouridine(20/20a) synthase, found in Pseudomonas aeruginosa (strain ATCC 15692 / DSM 22644 / CIP 104116 / JCM 14847 / LMG 12228 / 1C / PRS 101 / PAO1).